A 233-amino-acid polypeptide reads, in one-letter code: Phosphoribosylaminoimidazole-succinocarboxamide synthase (233 aa).

Belongs to the SAICAR synthetase family.

The enzyme catalyses 5-amino-1-(5-phospho-D-ribosyl)imidazole-4-carboxylate + L-aspartate + ATP = (2S)-2-[5-amino-1-(5-phospho-beta-D-ribosyl)imidazole-4-carboxamido]succinate + ADP + phosphate + 2 H(+). Its pathway is purine metabolism; IMP biosynthesis via de novo pathway; 5-amino-1-(5-phospho-D-ribosyl)imidazole-4-carboxamide from 5-amino-1-(5-phospho-D-ribosyl)imidazole-4-carboxylate: step 1/2. This Thermococcus sibiricus (strain DSM 12597 / MM 739) protein is Phosphoribosylaminoimidazole-succinocarboxamide synthase.